The sequence spans 494 residues: UDP-N-acetylmuramate--L-alanine ligase (494 aa).

Position 134-140 (134-140) interacts with ATP; it reads GSHGKTT.

This sequence belongs to the MurCDEF family.

The protein resides in the cytoplasm. It carries out the reaction UDP-N-acetyl-alpha-D-muramate + L-alanine + ATP = UDP-N-acetyl-alpha-D-muramoyl-L-alanine + ADP + phosphate + H(+). It participates in cell wall biogenesis; peptidoglycan biosynthesis. Its function is as follows. Cell wall formation. This Prochlorococcus marinus (strain NATL1A) protein is UDP-N-acetylmuramate--L-alanine ligase.